The chain runs to 301 residues: Protoheme IX farnesyltransferase 1 (301 aa).

The next 9 membrane-spanning stretches (helical) occupy residues 29 to 49 (VVALMLLTVLVGMCLAVPHAV), 51 to 71 (VQPLLAGMLGIAMMAGSAAAL), 101 to 121 (ALIFAASLGSLGFIVLYSLVN), 123 to 143 (LTAWLTFASLIGYALVYTAYL), 150 to 170 (NIVIGGLAGAMPPLLGWTAVT), 177 to 197 (ALLLVIIIFTWTPPHFWALAI), 223 to 243 (CILLYTVLLAIACLLPVLVGM), 244 to 264 (CGPVYFVCSSLLSTGFIYKAW), and 275 to 295 (AMQVFRFSIYHLMLLFMALLL).

The protein belongs to the UbiA prenyltransferase family. Protoheme IX farnesyltransferase subfamily.

It is found in the cell inner membrane. The catalysed reaction is heme b + (2E,6E)-farnesyl diphosphate + H2O = Fe(II)-heme o + diphosphate. It participates in porphyrin-containing compound metabolism; heme O biosynthesis; heme O from protoheme: step 1/1. Functionally, converts heme B (protoheme IX) to heme O by substitution of the vinyl group on carbon 2 of heme B porphyrin ring with a hydroxyethyl farnesyl side group. The polypeptide is Protoheme IX farnesyltransferase 1 (Shewanella baltica (strain OS185)).